The sequence spans 452 residues: mRNA export factor ICP27 homolog (452 aa).

Residues 42 to 164 form a disordered region; that stretch reads EAIGSTPGED…RNDQTHDESY (123 aa). The span at 98-107 shows a compositional bias: basic and acidic residues; that stretch reads SNHHGGRDVE. Basic residues predominate over residues 129–144; it reads SRKHRDRSLSNRRRRP. Over residues 154-164 the composition is skewed to basic and acidic residues; sequence ERNDQTHDESY. Residues Cys-335, His-417, Cys-421, and Cys-426 each coordinate Zn(2+). A CHC2-type zinc finger spans residues 335–426; that stretch reads CLLLNRDNDL…HQRECGRVEC (92 aa).

The protein belongs to the HHV-1 ICP27 protein family. In terms of assembly, homodimer. Homodimerization is required for transactivation. Associates in a complex with RNA, and host export factors NXF1/TAP and ALYREF; these interactions allow nuclear export of viral transcripts. Interacts with three host shuttling SR proteins SRSF1, SRSF3 and SRSF7. Interacts with host SRPK1. Interacts with IE62; this interaction enhances IE62 transactivation. Post-translationally, phosphorylated in vitro by SRPK1.

It localises to the host cytoplasm. The protein resides in the host nucleus. Functionally, multifunctional regulator of the expression of viral genes that mediates nuclear export of viral intronless mRNAs. This immediate early (EI) protein promotes the nuclear export of viral intronless mRNAs by interacting with mRNAs and host NXF1/TAP. The chain is mRNA export factor ICP27 homolog from Varicella-zoster virus (strain Dumas) (HHV-3).